The following is a 148-amino-acid chain: Lipoprotein MlpH (148 aa).

A signal peptide spans 1-17 (MKIINILFCLFLLMLNG). Cys18 carries the N-palmitoyl cysteine lipid modification. The S-diacylglycerol cysteine moiety is linked to residue Cys18. The disordered stretch occupies residues 26-61 (LKNNAQQTKSRRKRDLTQKEVTQEKPKSKEELLREK). Residues 40-61 (DLTQKEVTQEKPKSKEELLREK) show a composition bias toward basic and acidic residues.

The protein belongs to the Multicopy lipoprotein (Mlp) family.

It localises to the cell outer membrane. In terms of biological role, an outer membrane protein that may participate in pathogenesis. Some human Lyme disease patients have antibodies against this protein. The Mlp proteins probably undergo intragenic recombination, generating new alleles. The sequence is that of Lipoprotein MlpH from Borreliella burgdorferi (strain ATCC 35210 / DSM 4680 / CIP 102532 / B31) (Borrelia burgdorferi).